The following is an 834-amino-acid chain: Periplasmic nitrate reductase (834 aa).

Residues M1–A32 constitute a signal peptide (tat-type signal). Residues L44–D100 enclose the 4Fe-4S Mo/W bis-MGD-type domain. [4Fe-4S] cluster is bound by residues C51, C54, C58, and C86. Residues K88, Q155, N180, C184, W217–M224, S248–H252, Q267–D269, M378, Q382, N488, S514–D515, K537, D564, and T724–S733 contribute to the Mo-bis(molybdopterin guanine dinucleotide) site. Residue W800 participates in substrate binding. The Mo-bis(molybdopterin guanine dinucleotide) site is built by N808 and K825.

Belongs to the prokaryotic molybdopterin-containing oxidoreductase family. NasA/NapA/NarB subfamily. As to quaternary structure, component of the periplasmic nitrate reductase NapAB complex composed of NapA and NapB. It depends on [4Fe-4S] cluster as a cofactor. Mo-bis(molybdopterin guanine dinucleotide) is required as a cofactor. In terms of processing, predicted to be exported by the Tat system. The position of the signal peptide cleavage has not been experimentally proven.

It is found in the periplasm. The enzyme catalyses 2 Fe(II)-[cytochrome] + nitrate + 2 H(+) = 2 Fe(III)-[cytochrome] + nitrite + H2O. Functionally, catalytic subunit of the periplasmic nitrate reductase complex NapAB. Receives electrons from NapB and catalyzes the reduction of nitrate to nitrite. The polypeptide is Periplasmic nitrate reductase (Bradyrhizobium sp. (strain BTAi1 / ATCC BAA-1182)).